The primary structure comprises 488 residues: 1-aminocyclopropane-1-carboxylate synthase-like protein 1 (488 aa).

Lysine 273 carries the N6-(pyridoxal phosphate)lysine modification.

It belongs to the class-I pyridoxal-phosphate-dependent aminotransferase family. Homodimer. Expressed in young leaves and flowers. Not expressed in roots.

This Arabidopsis thaliana (Mouse-ear cress) protein is 1-aminocyclopropane-1-carboxylate synthase-like protein 1 (ACS1).